We begin with the raw amino-acid sequence, 174 residues long: 3-hydroxydecanoyl-[acyl-carrier-protein] dehydratase (174 aa).

H71 is an active-site residue.

It belongs to the thioester dehydratase family. FabA subfamily. In terms of assembly, homodimer.

It is found in the cytoplasm. It carries out the reaction a (3R)-hydroxyacyl-[ACP] = a (2E)-enoyl-[ACP] + H2O. It catalyses the reaction (3R)-hydroxydecanoyl-[ACP] = (2E)-decenoyl-[ACP] + H2O. The enzyme catalyses (2E)-decenoyl-[ACP] = (3Z)-decenoyl-[ACP]. It participates in lipid metabolism; fatty acid biosynthesis. Functionally, necessary for the introduction of cis unsaturation into fatty acids. Catalyzes the dehydration of (3R)-3-hydroxydecanoyl-ACP to E-(2)-decenoyl-ACP and then its isomerization to Z-(3)-decenoyl-ACP. Can catalyze the dehydratase reaction for beta-hydroxyacyl-ACPs with saturated chain lengths up to 16:0, being most active on intermediate chain length. The sequence is that of 3-hydroxydecanoyl-[acyl-carrier-protein] dehydratase from Nitrobacter hamburgensis (strain DSM 10229 / NCIMB 13809 / X14).